Here is a 283-residue protein sequence, read N- to C-terminus: Secretory carrier-associated membrane protein 2 (283 aa).

The tract at residues 1 to 47 (MARHDPNPFADEEINPFANHTSVPPASNSYLKPLPPEPYDRGATVDI) is disordered. The Cytoplasmic portion of the chain corresponds to 1-123 (MARHDPNPFA…LQKIQYVAFT (123 aa)). Residues 18-30 (ANHTSVPPASNSY) show a composition bias toward polar residues. Positions 50 to 87 (DSGNDLRAKEMELQAKENELKRKEQELKRREDAIARTG) form a coiled coil. Transmembrane regions (helical) follow at residues 124 to 144 (TLLG…VAWI), 151 to 171 (IWLL…VLWY), 186 to 206 (FGAF…AAVA), and 234 to 254 (IMYF…IWVI). Residues 255-283 (QQVYAYFRGSGKAAEMKREATKSTLMRAL) lie on the Cytoplasmic side of the membrane.

It belongs to the SCAMP family.

It is found in the cell membrane. It localises to the cytoplasmic vesicle. The protein resides in the secretory vesicle membrane. Probably involved in membrane trafficking. This Arabidopsis thaliana (Mouse-ear cress) protein is Secretory carrier-associated membrane protein 2 (SCAMP2).